We begin with the raw amino-acid sequence, 505 residues long: DDB1- and CUL4-associated factor 17 (505 aa).

2 helical membrane passes run 186 to 206 (VLLYLAVFRVLPFSLVGILEI) and 222 to 242 (GILIVMYSSGLVRLYSFQAII).

As to quaternary structure, interacts with DDB1, CUL4A and CUL4B.

It is found in the membrane. The protein localises to the nucleus. It localises to the nucleolus. The protein operates within protein modification; protein ubiquitination. May function as a substrate receptor for CUL4-DDB1 E3 ubiquitin-protein ligase complex. In Rattus norvegicus (Rat), this protein is DDB1- and CUL4-associated factor 17 (Dcaf17).